A 121-amino-acid chain; its full sequence is MSKLTIEQFIAAIKEMSMLELNDLVKAIETEFGVSAAAPVAVAAAPAAAEAPTEVTIKLVEAGANKVGVIKLIREITGLGLMEAKTAAETAGSVIKEDVKTEEANEIKKKFDELGAKVQLV.

It belongs to the bacterial ribosomal protein bL12 family. Homodimer. Part of the ribosomal stalk of the 50S ribosomal subunit. Forms a multimeric L10(L12)X complex, where L10 forms an elongated spine to which 2 to 4 L12 dimers bind in a sequential fashion. Binds GTP-bound translation factors.

Functionally, forms part of the ribosomal stalk which helps the ribosome interact with GTP-bound translation factors. Is thus essential for accurate translation. The protein is Large ribosomal subunit protein bL12 of Ureaplasma urealyticum serovar 10 (strain ATCC 33699 / Western).